Consider the following 245-residue polypeptide: ATP synthase subunit a (245 aa).

7 consecutive transmembrane segments (helical) span residues 5–25 (LWFTAFLNQYLAGPVSAMMSV), 37–57 (ISNYVAMEILVFLLLVLFFIA), 99–119 (YIVTLGVFILSMNLIGLIPGF), 125–145 (FPSVPLGCALVTWFFYHVHGL), 157–177 (FLGPVWWISPLLFVIEICSHF), 187–209 (LYANMFAGDMVTLAFFSLVPLGF), and 221–241 (SLIQTYIFITLAAVYLAEATA).

This sequence belongs to the ATPase A chain family. As to quaternary structure, F-type ATPases have 2 components, CF(1) - the catalytic core - and CF(0) - the membrane proton channel. CF(1) has five subunits: alpha(3), beta(3), gamma(1), delta(1), epsilon(1). CF(0) has three main subunits: a(1), b(2) and c(9-12). The alpha and beta chains form an alternating ring which encloses part of the gamma chain. CF(1) is attached to CF(0) by a central stalk formed by the gamma and epsilon chains, while a peripheral stalk is formed by the delta and b chains.

It localises to the cell inner membrane. In terms of biological role, key component of the proton channel; it plays a direct role in the translocation of protons across the membrane. The sequence is that of ATP synthase subunit a from Koribacter versatilis (strain Ellin345).